The primary structure comprises 181 residues: Adenine phosphoribosyltransferase (181 aa).

This sequence belongs to the purine/pyrimidine phosphoribosyltransferase family. Homodimer.

It is found in the cytoplasm. It carries out the reaction AMP + diphosphate = 5-phospho-alpha-D-ribose 1-diphosphate + adenine. The protein operates within purine metabolism; AMP biosynthesis via salvage pathway; AMP from adenine: step 1/1. Its function is as follows. Catalyzes a salvage reaction resulting in the formation of AMP, that is energically less costly than de novo synthesis. The sequence is that of Adenine phosphoribosyltransferase from Rhodopseudomonas palustris (strain ATCC BAA-98 / CGA009).